Consider the following 356-residue polypeptide: Glucan endo-1,3-beta-glucosidase, acidic isoform GL153 (356 aa).

Positions 1–29 are cleaved as a signal peptide; the sequence is MALCIKNGFLAAALVLVGLLMCSIQMIGA. Gln-30 is subject to Pyrrolidone carboxylic acid. Asn-95 carries N-linked (GlcNAc...) asparagine glycosylation. Glu-124 serves as the catalytic Proton donor. The active-site Nucleophile is Glu-264.

Belongs to the glycosyl hydrolase 17 family. Is expressed primarily in epidermal cell of healthy plant, and following induction by ethylene, accumulates in mesophyll cells.

It is found in the secreted. The protein resides in the extracellular space. It carries out the reaction Hydrolysis of (1-&gt;3)-beta-D-glucosidic linkages in (1-&gt;3)-beta-D-glucans.. In terms of biological role, is thought to be an important plant defense-related product against fungal pathogens. The chain is Glucan endo-1,3-beta-glucosidase, acidic isoform GL153 (GGL4) from Nicotiana tabacum (Common tobacco).